A 512-amino-acid chain; its full sequence is Bifunctional purine biosynthesis protein PurH (512 aa).

Residues 1–144 (MKRALVSVSD…KNYHDVTIVV (144 aa)) enclose the MGS-like domain.

It belongs to the PurH family.

The enzyme catalyses (6R)-10-formyltetrahydrofolate + 5-amino-1-(5-phospho-beta-D-ribosyl)imidazole-4-carboxamide = 5-formamido-1-(5-phospho-D-ribosyl)imidazole-4-carboxamide + (6S)-5,6,7,8-tetrahydrofolate. It carries out the reaction IMP + H2O = 5-formamido-1-(5-phospho-D-ribosyl)imidazole-4-carboxamide. The protein operates within purine metabolism; IMP biosynthesis via de novo pathway; 5-formamido-1-(5-phospho-D-ribosyl)imidazole-4-carboxamide from 5-amino-1-(5-phospho-D-ribosyl)imidazole-4-carboxamide (10-formyl THF route): step 1/1. Its pathway is purine metabolism; IMP biosynthesis via de novo pathway; IMP from 5-formamido-1-(5-phospho-D-ribosyl)imidazole-4-carboxamide: step 1/1. The polypeptide is Bifunctional purine biosynthesis protein PurH (Limosilactobacillus reuteri (strain DSM 20016) (Lactobacillus reuteri)).